A 1137-amino-acid polypeptide reads, in one-letter code: DNA mismatch repair protein Msh3 (1137 aa).

Composition is skewed to low complexity over residues 31-42 (TGSLKSTSSSTG) and 51-62 (AAAAAAAAAAAA). 2 disordered regions span residues 31–122 (TGSL…SEPK) and 201–222 (SQFG…KSAN). Serine 33 is subject to Phosphoserine. Pro residues predominate over residues 63–76 (PPAPPAPAFPPQLP). The interaction with EXO1 stretch occupies residues 75 to 297 (LPPHIATEID…HRLFVHVRRL (223 aa)). Residues 81–97 (TEIDRRKKRPLENDGPV) show a composition bias toward basic and acidic residues. The segment covering 201-220 (SQFGSSNTSHENLQKTASKS) has biased composition (polar residues). 896–903 (GPNMGGKS) provides a ligand contact to ATP. Threonine 1099 is modified (phosphothreonine).

The protein belongs to the DNA mismatch repair MutS family. MSH3 subfamily. As to quaternary structure, component of the DNA mismatch repair (MMR) complex composed at least of MSH2, MSH3, MSH6, PMS1 and MLH1. Heterodimer consisting of MSH2-MSH3 (MutS beta). Forms a ternary complex with MutL alpha (MLH1-PMS1). Interacts with EXO1. Interacts with MCM9.

In terms of biological role, component of the post-replicative DNA mismatch repair system (MMR). Heterodimerizes with MSH2 to form MutS beta which binds to DNA mismatches thereby initiating DNA repair. When bound, the MutS beta heterodimer bends the DNA helix and shields approximately 20 base pairs. MutS beta recognizes large insertion-deletion loops (IDL) up to 13 nucleotides long. After mismatch binding, forms a ternary complex with the MutL alpha heterodimer, which is thought to be responsible for directing the downstream MMR events, including strand discrimination, excision, and resynthesis. In Homo sapiens (Human), this protein is DNA mismatch repair protein Msh3 (MSH3).